Consider the following 578-residue polypeptide: Protein O-linked-mannose beta-1,4-N-acetylglucosaminyltransferase 2 (578 aa).

At 1–4 (MNIS) the chain is on the cytoplasmic side. The chain crosses the membrane as a helical; Signal-anchor for type II membrane protein span at residues 5–25 (AVFSALLVSIMAAVLWKHVKL). At 26-578 (LDQFYVIEEE…PFAEVLVCST (553 aa)) the chain is on the lumenal side. Residues asparagine 98, asparagine 275, asparagine 335, asparagine 451, asparagine 541, and asparagine 563 are each glycosylated (N-linked (GlcNAc...) asparagine). The 95-residue stretch at 484–578 (RESKCQASAQ…PFAEVLVCST (95 aa)) folds into the Fibronectin type-III domain.

Belongs to the glycosyltransferase 61 family.

The protein resides in the endoplasmic reticulum membrane. It carries out the reaction 3-O-(alpha-D-mannosyl)-L-threonyl-[protein] + UDP-N-acetyl-alpha-D-glucosamine = 3-O-(N-acetyl-beta-D-glucosaminyl-(1-&gt;4)-alpha-D-mannosyl)-L-threonyl-[protein] + UDP + H(+). It participates in protein modification; protein glycosylation. O-linked mannose beta-1,4-N-acetylglucosaminyltransferase that transfers UDP-N-acetyl-D-glucosamine to the 4-position of the mannose to generate N-acetyl-D-glucosamine-beta-1,4-O-D-mannosylprotein. Involved in the biosynthesis of the phosphorylated O-mannosyl trisaccharide (N-acetylgalactosamine-beta-3-N-acetylglucosamine-beta-4-(phosphate-6-)mannose), a carbohydrate structure present in alpha-dystroglycan (DAG1), which is required for binding laminin G-like domain-containing extracellular proteins with high affinity. This is Protein O-linked-mannose beta-1,4-N-acetylglucosaminyltransferase 2 (pomgnt2) from Xenopus laevis (African clawed frog).